The following is a 208-amino-acid chain: Ribosomal RNA small subunit methyltransferase G (208 aa).

S-adenosyl-L-methionine is bound by residues Gly-78, Phe-83, 101-103 (ERS), 129-130 (IE), and Arg-142.

It belongs to the methyltransferase superfamily. RNA methyltransferase RsmG family.

The protein resides in the cytoplasm. Its function is as follows. Specifically methylates the N7 position of a guanine in 16S rRNA. In Borrelia garinii subsp. bavariensis (strain ATCC BAA-2496 / DSM 23469 / PBi) (Borreliella bavariensis), this protein is Ribosomal RNA small subunit methyltransferase G.